The chain runs to 534 residues: C-type lectin domain family 18 member A (534 aa).

The tract at residues 47–88 (GALPVAGKPEPMARSLASAPVSPWHHMDRGSTTPAKARSHSA) is disordered. Residues 139–270 (LTAHNRLRSR…EAMEAFVCAY (132 aa)) form the SCP domain. An EGF-like domain is found at 316 to 349 (PRNPCRMSCRNLGHLNISTCRCHCQPGYTGRYCQ). 4 disulfides stabilise this stretch: Cys324/Cys337, Cys339/Cys348, Cys415/Cys520, and Cys496/Cys512. Positions 394 to 521 (IDGDCFMVSP…CKTRNRYICQ (128 aa)) constitute a C-type lectin domain.

The protein resides in the secreted. The chain is C-type lectin domain family 18 member A (Clec18a) from Mus musculus (Mouse).